A 325-amino-acid polypeptide reads, in one-letter code: Aldose 1-epimerase (325 aa).

73 to 74 (NR) is a binding site for substrate. Histidine 177 functions as the Proton donor in the catalytic mechanism. Residue aspartate 230 coordinates substrate. The active-site Proton acceptor is glutamate 283.

It belongs to the aldose epimerase family.

The catalysed reaction is alpha-D-glucose = beta-D-glucose. It participates in carbohydrate metabolism; hexose metabolism. The sequence is that of Aldose 1-epimerase (galM) from Bacillus subtilis (strain 168).